We begin with the raw amino-acid sequence, 375 residues long: Growth/differentiation factor 8 (375 aa).

An N-terminal signal peptide occupies residues 1–23; that stretch reads MQKLQLCVYIYLFMLIVAGPVDL. A propeptide spanning residues 24 to 266 is cleaved from the precursor; the sequence is NENSEQKENV…VTDTPKRSRR (243 aa). Asn-71 is a glycosylation site (N-linked (GlcNAc...) asparagine). Disulfide bonds link Cys-272–Cys-282, Cys-281–Cys-340, Cys-309–Cys-372, and Cys-313–Cys-374.

It belongs to the TGF-beta family. As to quaternary structure, homodimer; disulfide-linked. Interacts with WFIKKN2, leading to inhibit its activity. Interacts with FSTL3. In terms of processing, synthesized as large precursor molecule that undergoes proteolytic cleavage to generate an N-terminal propeptide and a disulfide linked C-terminal dimer, which is the biologically active molecule. The circulating form consists of a latent complex of the C-terminal dimer and other proteins, including its propeptide, which maintain the C-terminal dimer in a latent, inactive state. Ligand activation requires additional cleavage of the prodomain by a tolloid-like metalloproteinase.

It localises to the secreted. Functionally, acts specifically as a negative regulator of skeletal muscle growth. This is Growth/differentiation factor 8 (MSTN) from Papio hamadryas (Hamadryas baboon).